The primary structure comprises 314 residues: Small ribosomal subunit biogenesis GTPase RsgA (314 aa).

Residues 1–21 form a disordered region; that stretch reads MKRAPTKQPAKPAARGGERAQ. Positions 85–246 constitute a CP-type G domain; the sequence is SDQFKSKLFA…LIDSPGFQEF (162 aa). Residues 134 to 137 and 188 to 196 contribute to the GTP site; these read NKID and GQSGMGKST. Zn(2+) contacts are provided by Cys-270, Cys-275, His-277, and Cys-283.

This sequence belongs to the TRAFAC class YlqF/YawG GTPase family. RsgA subfamily. In terms of assembly, monomer. Associates with 30S ribosomal subunit, binds 16S rRNA. Zn(2+) is required as a cofactor.

Its subcellular location is the cytoplasm. In terms of biological role, one of several proteins that assist in the late maturation steps of the functional core of the 30S ribosomal subunit. Helps release RbfA from mature subunits. May play a role in the assembly of ribosomal proteins into the subunit. Circularly permuted GTPase that catalyzes slow GTP hydrolysis, GTPase activity is stimulated by the 30S ribosomal subunit. This is Small ribosomal subunit biogenesis GTPase RsgA from Burkholderia pseudomallei (strain 1710b).